Reading from the N-terminus, the 691-residue chain is MSQIPQAVRERADTLHQQLDDANYQYYVEDDPRITDAEYDALLRELQSLEAEHPELKTPDSPTQRVGAAPAERFEEVTHAVPMLSLDNAFDDAELAAFVKRVADKLECDGDTLAFCCEPKLDGLAVALVYENGRLVQGATRGDGRTGEDVTLNLRTIRSIPLKLRGDSIPPLIEVRGEVYMRHSGFEALNDRARENGDKVFANPRNAAAGSLRQLDSSIAAARPLEFCAYQVARLEGEDDAHSHSDYLKRLRTLGFRTSPLLDVVKGERGVIDFCHRLGEQRNGLDYDIDGAVIKVDSLRDQRELGFVSRAPRWAIAYKYPAQEQTTTLNDVVFQVGRVGTLTPVAKLEPVQVAGVTVANATLHNMDEIERLGVRIGDTVIVRRAGDVIPQIVGVVESQRPATTRAIEMPEHCPVCGSQTERLEGEVAARCSGGLFCPAQRKEALKHFASRRALDIDGLGEKLIDLLVEREWVKTPADLFRLEAERLAELPRLAEKSANNLVNALEAAKRTTLARFIYAIGIREVGEATAASLARHFGSLQALSEASLEALEAVEDVGPVVARHIHTFFRQPHNQETLEDLQGVGVTWEEVEIAGRPQPLAGQTWVLTGTLESMTRDDGKARLQALGAKVSGSVSKKTAGVVAGEAAGSKLEKAQNLGVEVIDEREFLQRLAHWESASSEDAQPTAPEDTP.

Residues 36–40 (DAEYD), 85–86 (SL), and glutamate 118 contribute to the NAD(+) site. Lysine 120 serves as the catalytic N6-AMP-lysine intermediate. The NAD(+) site is built by arginine 141, glutamate 178, lysine 295, and lysine 319. Residues cysteine 413, cysteine 416, cysteine 431, and cysteine 437 each contribute to the Zn(2+) site. The BRCT domain occupies 595–684 (GRPQPLAGQT…ESASSEDAQP (90 aa)).

Belongs to the NAD-dependent DNA ligase family. LigA subfamily. It depends on Mg(2+) as a cofactor. Mn(2+) is required as a cofactor.

It carries out the reaction NAD(+) + (deoxyribonucleotide)n-3'-hydroxyl + 5'-phospho-(deoxyribonucleotide)m = (deoxyribonucleotide)n+m + AMP + beta-nicotinamide D-nucleotide.. DNA ligase that catalyzes the formation of phosphodiester linkages between 5'-phosphoryl and 3'-hydroxyl groups in double-stranded DNA using NAD as a coenzyme and as the energy source for the reaction. It is essential for DNA replication and repair of damaged DNA. This is DNA ligase from Chromohalobacter salexigens (strain ATCC BAA-138 / DSM 3043 / CIP 106854 / NCIMB 13768 / 1H11).